Reading from the N-terminus, the 290-residue chain is Probable prolyl 4-hydroxylase 8 (290 aa).

The Cytoplasmic segment spans residues 1 to 19 (MAKKPKQLRNKPRKSFSTQ). The chain crosses the membrane as a helical; Signal-anchor for type II membrane protein span at residues 20-40 (TFTVVVLVLFVILILVGLGIF). Over 41 to 290 (SLPSTNKTSS…TKWFHVHEYN (250 aa)) the chain is Lumenal. Residue Asn46 is glycosylated (N-linked (GlcNAc...) asparagine). One can recognise a Fe2OG dioxygenase domain in the interval 163–286 (NGEGLQVLHY…KWSSTKWFHV (124 aa)). 2 residues coordinate Fe cation: His181 and Asp183. N-linked (GlcNAc...) asparagine glycosylation occurs at Asn222. His267 is a Fe cation binding site. 2-oxoglutarate is bound at residue Lys277.

The protein belongs to the P4HA family. It depends on Fe(2+) as a cofactor. The cofactor is L-ascorbate.

The protein localises to the endoplasmic reticulum membrane. It catalyses the reaction L-prolyl-[collagen] + 2-oxoglutarate + O2 = trans-4-hydroxy-L-prolyl-[collagen] + succinate + CO2. In terms of biological role, catalyzes the post-translational formation of 4-hydroxyproline in -Xaa-Pro-Gly- sequences in proline-rich peptide sequences of plant glycoproteins and other proteins. Hydroxyprolines are important constituent of many plant cell wall glycoproteins such as extensins, hydroxyproline-rich glycoproteins, lectins and arabinogalactan proteins. This chain is Probable prolyl 4-hydroxylase 8, found in Arabidopsis thaliana (Mouse-ear cress).